We begin with the raw amino-acid sequence, 434 residues long: Trigger factor (434 aa).

The 86-residue stretch at 160-245 (GDKVKMNFVG…LTEVQAAQLP (86 aa)) folds into the PPIase FKBP-type domain.

Belongs to the FKBP-type PPIase family. Tig subfamily.

The protein localises to the cytoplasm. It carries out the reaction [protein]-peptidylproline (omega=180) = [protein]-peptidylproline (omega=0). In terms of biological role, involved in protein export. Acts as a chaperone by maintaining the newly synthesized protein in an open conformation. Functions as a peptidyl-prolyl cis-trans isomerase. This Shewanella denitrificans (strain OS217 / ATCC BAA-1090 / DSM 15013) protein is Trigger factor.